The sequence spans 393 residues: MSCSQNKTSVSLAWRECISIASVLIGAYASYKYYKLFKTRDIPRPKEGVEELIGNTPLVKIRSLTKATGVNIYAKLELCNPAGSAKDRVALNIIKTAEELGELVRGEPGWVFEGTSGSTGISIAVVCNALGYRAHISLPDDTSLEKLALLESLGATVNKVKPASIVDPNQYVNAAKKACNELKKSGNGIRAVFADQFENEANWKVHYQTTGPEIAHQTKGNIDAFIAGCGTGGTITGVAKFLKERAKIPCHVVLADPQGSGFYNRVNYGVMYDYVEKEGTRRRHQVDTIVEGIGLNRITHNFHMGEKFIDESIRVNDNQAIRMAKYLSVNDGLFVGSSTAINAVAAIQVAKTLPHGSNIVIIACDSGSRHLSKFWKEAKEIDHDVSLEEVINI.

A helical membrane pass occupies residues 12 to 31 (LAWRECISIASVLIGAYASY). An N6-(pyridoxal phosphate)lysine modification is found at K86. Pyridoxal 5'-phosphate is bound by residues 230–234 (GTGGT) and S338.

It belongs to the cysteine synthase/cystathionine beta-synthase family. Pyridoxal 5'-phosphate is required as a cofactor.

It localises to the mitochondrion. The protein resides in the mitochondrion outer membrane. The catalysed reaction is O-acetyl-L-serine + hydrogen sulfide = L-cysteine + acetate. In terms of biological role, putative cysteine synthase that catalyzes the conversion of O-acetyl-L-serine (OAS) into cysteine, the last step in the cysteine biosynthesis pathway. However, this CS-like protein is unlikely to function in cysteine biosynthesis. It seems that in S.cerevisiae cysteine biosynthesis occurs exclusively through the cystathionine pathway and not via direct incorporation of sulfur into OAS. This Saccharomyces cerevisiae (strain ATCC 204508 / S288c) (Baker's yeast) protein is Putative mitochondrial cysteine synthase.